The sequence spans 122 residues: Large ribosomal subunit protein uL14 (122 aa).

The protein belongs to the universal ribosomal protein uL14 family. In terms of assembly, part of the 50S ribosomal subunit. Forms a cluster with proteins L3 and L19. In the 70S ribosome, L14 and L19 interact and together make contacts with the 16S rRNA in bridges B5 and B8.

Its function is as follows. Binds to 23S rRNA. Forms part of two intersubunit bridges in the 70S ribosome. This chain is Large ribosomal subunit protein uL14, found in Ruminiclostridium cellulolyticum (strain ATCC 35319 / DSM 5812 / JCM 6584 / H10) (Clostridium cellulolyticum).